The primary structure comprises 140 residues: Nucleoside diphosphate kinase (140 aa).

Positions 11, 59, 87, 93, 104, and 114 each coordinate ATP. His-117 acts as the Pros-phosphohistidine intermediate in catalysis.

This sequence belongs to the NDK family. As to quaternary structure, homotetramer. Mg(2+) serves as cofactor.

The protein resides in the cytoplasm. It catalyses the reaction a 2'-deoxyribonucleoside 5'-diphosphate + ATP = a 2'-deoxyribonucleoside 5'-triphosphate + ADP. It carries out the reaction a ribonucleoside 5'-diphosphate + ATP = a ribonucleoside 5'-triphosphate + ADP. In terms of biological role, major role in the synthesis of nucleoside triphosphates other than ATP. The ATP gamma phosphate is transferred to the NDP beta phosphate via a ping-pong mechanism, using a phosphorylated active-site intermediate. The protein is Nucleoside diphosphate kinase of Sphingopyxis alaskensis (strain DSM 13593 / LMG 18877 / RB2256) (Sphingomonas alaskensis).